A 260-amino-acid polypeptide reads, in one-letter code: Pyridoxine 5'-phosphate synthase (260 aa).

3-amino-2-oxopropyl phosphate-binding residues include Asn10 and Arg21. His46 serves as the catalytic Proton acceptor. Arg48 and His53 together coordinate 1-deoxy-D-xylulose 5-phosphate. Glu76 serves as the catalytic Proton acceptor. Thr113 serves as a coordination point for 1-deoxy-D-xylulose 5-phosphate. The Proton donor role is filled by His204. 3-amino-2-oxopropyl phosphate is bound by residues Asp205 and 227–228 (GH).

This sequence belongs to the PNP synthase family. As to quaternary structure, homooctamer; tetramer of dimers.

It localises to the cytoplasm. The catalysed reaction is 3-amino-2-oxopropyl phosphate + 1-deoxy-D-xylulose 5-phosphate = pyridoxine 5'-phosphate + phosphate + 2 H2O + H(+). It participates in cofactor biosynthesis; pyridoxine 5'-phosphate biosynthesis; pyridoxine 5'-phosphate from D-erythrose 4-phosphate: step 5/5. Its function is as follows. Catalyzes the complicated ring closure reaction between the two acyclic compounds 1-deoxy-D-xylulose-5-phosphate (DXP) and 3-amino-2-oxopropyl phosphate (1-amino-acetone-3-phosphate or AAP) to form pyridoxine 5'-phosphate (PNP) and inorganic phosphate. In Xylella fastidiosa (strain M23), this protein is Pyridoxine 5'-phosphate synthase.